The chain runs to 257 residues: Acetylglutamate kinase (257 aa).

Residues 43-44, arginine 65, and asparagine 157 each bind substrate; that span reads GG.

Belongs to the acetylglutamate kinase family. ArgB subfamily.

Its subcellular location is the cytoplasm. It carries out the reaction N-acetyl-L-glutamate + ATP = N-acetyl-L-glutamyl 5-phosphate + ADP. The protein operates within amino-acid biosynthesis; L-arginine biosynthesis; N(2)-acetyl-L-ornithine from L-glutamate: step 2/4. Its function is as follows. Catalyzes the ATP-dependent phosphorylation of N-acetyl-L-glutamate. The protein is Acetylglutamate kinase of Mannheimia succiniciproducens (strain KCTC 0769BP / MBEL55E).